The sequence spans 546 residues: Probable protein kinase UbiB (546 aa).

One can recognise a Protein kinase domain in the interval 124-502; the sequence is DFDIQPLASA…HVRQSQSRYL (379 aa). ATP is bound by residues 130 to 138 and Lys-153; that span reads LASASIAQV. Asp-288 acts as the Proton acceptor in catalysis. Transmembrane regions (helical) follow at residues 501-521 and 522-542; these read YLLGIGATLLLSGSFLLVNRP and EWGLMPGWLMVGGVVVWLVGW.

The protein belongs to the ABC1 family. UbiB subfamily.

Its subcellular location is the cell inner membrane. Its pathway is cofactor biosynthesis; ubiquinone biosynthesis [regulation]. Functionally, is probably a protein kinase regulator of UbiI activity which is involved in aerobic coenzyme Q (ubiquinone) biosynthesis. The sequence is that of Probable protein kinase UbiB from Salmonella enteritidis PT4 (strain P125109).